The primary structure comprises 266 residues: Undecaprenyl-diphosphatase (266 aa).

The next 8 membrane-spanning stretches (helical) occupy residues 1-21 (MDTF…FLPI), 39-59 (QGLS…VMYF), 87-107 (WWII…KDFI), 111-131 (FRSI…LWWA), 144-164 (VGWK…IPGT), 183-203 (AAAR…AILV), 218-238 (ALGL…HYFL), and 246-266 (MTPF…IIFL).

Belongs to the UppP family.

Its subcellular location is the cell inner membrane. The enzyme catalyses di-trans,octa-cis-undecaprenyl diphosphate + H2O = di-trans,octa-cis-undecaprenyl phosphate + phosphate + H(+). Functionally, catalyzes the dephosphorylation of undecaprenyl diphosphate (UPP). Confers resistance to bacitracin. This Shewanella pealeana (strain ATCC 700345 / ANG-SQ1) protein is Undecaprenyl-diphosphatase.